Consider the following 541-residue polypeptide: Chaperonin GroEL 2 (541 aa).

Residues 29–32 (TLGP), 86–90 (DGTTT), glycine 413, 476–478 (NAA), and aspartate 492 each bind ATP.

It belongs to the chaperonin (HSP60) family. In terms of assembly, forms a cylinder of 14 subunits composed of two heptameric rings stacked back-to-back. Interacts with the co-chaperonin GroES.

It localises to the secreted. It is found in the capsule. The protein localises to the cell surface. Its subcellular location is the cell wall. It catalyses the reaction ATP + H2O + a folded polypeptide = ADP + phosphate + an unfolded polypeptide.. In terms of biological role, together with its co-chaperonin GroES, plays an essential role in assisting protein folding. The GroEL-GroES system forms a nano-cage that allows encapsulation of the non-native substrate proteins and provides a physical environment optimized to promote and accelerate protein folding. This Mycolicibacterium paratuberculosis (strain ATCC BAA-968 / K-10) (Mycobacterium paratuberculosis) protein is Chaperonin GroEL 2.